The primary structure comprises 212 residues: Redox-sensing transcriptional repressor Rex (212 aa).

The segment at residues 17 to 56 (KYHRYLQELMENDIDRISSKELSEKIGFTASQIRQDLNCF) is a DNA-binding region (H-T-H motif). An NAD(+)-binding site is contributed by 91-96 (GAGNIG).

This sequence belongs to the transcriptional regulatory Rex family. Homodimer.

Its subcellular location is the cytoplasm. In terms of biological role, modulates transcription in response to changes in cellular NADH/NAD(+) redox state. The protein is Redox-sensing transcriptional repressor Rex of Clostridium perfringens (strain SM101 / Type A).